We begin with the raw amino-acid sequence, 235 residues long: Small ribosomal subunit protein eS4 (235 aa).

The region spanning 38-101 (IPLLVLVRDF…EKSYRILFDE (64 aa)) is the S4 RNA-binding domain.

The protein belongs to the eukaryotic ribosomal protein eS4 family.

This chain is Small ribosomal subunit protein eS4 (rps4e), found in Archaeoglobus fulgidus (strain ATCC 49558 / DSM 4304 / JCM 9628 / NBRC 100126 / VC-16).